The primary structure comprises 764 residues: Dehydrocurvularin biosynthesis regulator (764 aa).

Positions 28 to 59 (CWECKRRKMKCIFDPRITSTSCNGCRQRGSPC) form a DNA-binding region, zn(2)-C6 fungal-type. 3 disordered regions span residues 73–94 (HGAN…SDDA), 112–136 (YRYL…ASTC), and 633–672 (FPTS…PALS). Over residues 77–88 (DSASLDASTPIA) the composition is skewed to polar residues. Over residues 663–672 (HPNTPSPALS) the composition is skewed to polar residues.

Its subcellular location is the nucleus. In terms of biological role, transcription factor involved in regulation of the dehydrocurvularin biosynthesis gene cluster. The sequence is that of Dehydrocurvularin biosynthesis regulator from Alternaria cinerariae.